The sequence spans 51 residues: Sperm protamine P1 (51 aa).

Belongs to the protamine P1 family. In terms of assembly, cross-linked by interchain disulfide bonds around the DNA-helix. As to expression, testis.

It is found in the nucleus. Its subcellular location is the chromosome. Its function is as follows. Protamines substitute for histones in the chromatin of sperm during the haploid phase of spermatogenesis. They compact sperm DNA into a highly condensed, stable and inactive complex. The polypeptide is Sperm protamine P1 (PRM1) (Pongo pygmaeus (Bornean orangutan)).